We begin with the raw amino-acid sequence, 151 residues long: Neuroglobin (151 aa).

In terms of domain architecture, Globin spans 1 to 149; sequence MERPEHELIR…VVQAMSRGWN (149 aa). Heme b contacts are provided by His-64 and His-96.

This sequence belongs to the globin family. As to quaternary structure, monomer. Homodimer and homotetramer; disulfide-linked. Mainly monomeric but also detected as part of homodimers and homotetramers. Interacts with 14-3-3 proteins; regulates the phosphorylation of NGB. Could interact (ferrous form) with G-alpha(i) proteins (GTP-bound form). Post-translationally, phosphorylated during hypoxia by ERK1/ERK2. Phosphorylation regulates the heme pocket hexacoordination preventing the association of His-64 with the heme metal center. Thereby, promotes the access of dioxygen and nitrite to the heme and stimulates the nitrite reductase activity. Phosphorylation during hypoxia is stabilized by 14-3-3 proteins.

Its subcellular location is the cytoplasm. The protein resides in the cytosol. It is found in the mitochondrion matrix. It carries out the reaction Fe(III)-heme b-[protein] + nitric oxide + H2O = Fe(II)-heme b-[protein] + nitrite + 2 H(+). Monomeric globin with a bis-histidyl six-coordinate heme-iron atom through which it can bind dioxygen, carbon monoxide and nitric oxide. Could help transport oxygen and increase its availability to the metabolically active neuronal tissues, though its low quantity in tissues as well as its high affinity for dioxygen, which may limit its oxygen-releasing ability, argue against it. The ferrous/deoxygenated form exhibits a nitrite reductase activity and it could produce nitric oxide which in turn inhibits cellular respiration in response to hypoxia. In its ferrous/deoxygenated state, it may also exhibit GDI (Guanine nucleotide Dissociation Inhibitor) activity toward heterotrimeric G-alpha proteins, thereby regulating signal transduction to facilitate neuroprotective responses in the wake of hypoxia and associated oxidative stress. The polypeptide is Neuroglobin (Sus scrofa (Pig)).